Consider the following 3142-residue polypeptide: Huntingtin (3142 aa).

The tract at residues 3–13 is sufficient for interaction with TPR; sequence TLEKLMKAFES. Lysine 9 is modified (N6-acetyllysine). A disordered region spans residues 14–85; sequence LKSFQQQQQQ…PGPAVAEEPL (72 aa). The span at 18–37 shows a compositional bias: low complexity; that stretch reads QQQQQQQQQQQQQQQQQQQQ. Positions 38-78 are enriched in pro residues; the sequence is QPPPPPPPPPPPQLPQPPPQAQPLLPQPQPPPPPPPPPPGP. 2 positions are modified to N6-acetyllysine: lysine 176 and lysine 234. HEAT repeat units follow at residues 204 to 241, 246 to 283, and 316 to 360; these read PYLV…SFGN, NEIK…HSRR, and LTLR…VYEL. Residue lysine 343 is modified to N6-acetyllysine. Residues serine 411, serine 417, serine 419, and serine 432 each carry the phosphoserine modification. Residue lysine 442 is modified to N6-acetyllysine. The tract at residues 447–469 is disordered; that stretch reads EEEALEDDSESRSDVSSSALTAS. The segment at 491–502 is interaction with ZDHHC17; it reads GHDIITEQPRSQ. The interval 517–583 is disordered; that stretch reads LTSSATDGDE…TPSDSSEIVL (67 aa). The span at 531-545 shows a compositional bias: low complexity; that stretch reads SHSSSQVSAVPSDPA. Positions 550–579 are enriched in polar residues; sequence DGTQASSPISDSSQTTTEGPDSAVTPSDSS. Residue glycine 551 is the site of N-myristoyl glycine attachment. Serine 640 and serine 643 each carry phosphoserine. 2 HEAT repeats span residues 802–839 and 902–940; these read FSLA…SLCS and KLQE…KLFY. The segment at 1176–1225 is disordered; it reads PSLSPIRRKGKEKEPGEQASVPLSPKKGSEASAASRQSDTSGPVTTSKSS. A phosphoserine; by CDK5 mark is found at serine 1179 and serine 1199. Residues 1207-1225 show a composition bias toward polar residues; sequence SAASRQSDTSGPVTTSKSS. Phosphoserine occurs at positions 1870 and 1874. Residues 2330–2351 form a disordered region; it reads ERRTNTPKAISEEEEEVDPNTQ. The Nuclear export signal signature appears at 2395–2404; that stretch reads IIISLARLPL. The interval 2633-2662 is disordered; it reads EEEWDEEEEEEADAPAPSSPPTSPVNSRKH. Acidic residues predominate over residues 2634–2645; it reads EEWDEEEEEEAD.

The protein belongs to the huntingtin family. As to quaternary structure, interacts with PFN1. Interacts through its N-terminus with PRPF40A. Interacts with PQBP1. Interacts with SETD2. Interacts with SH3GLB1. Interacts with SYVN. Interacts with TPR; the interaction is inhibited by forms of Huntingtin with expanded polyglutamine stretch. Interacts with ZDHHC13 (via ANK repeats). Interacts with ZDHHC17 (via ANK repeats). Interacts with F8A1/F8A2/F8A3. Found in a complex with F8A1/F8A2/F8A3, HTT and RAB5A; mediates the recruitment of HTT by RAB5A. Post-translationally, cleaved by caspases downstream of the polyglutamine stretch. The resulting N-terminal fragments are cytotoxic and provokes apoptosis. In terms of processing, forms with expanded polyglutamine expansion are specifically ubiquitinated by SYVN1, which promotes their proteasomal degradation. Phosphorylation at Ser-1179 and Ser-1199 by CDK5 in response to DNA damage in nuclei of neurons protects neurons against polyglutamine expansion as well as DNA damage mediated toxicity. Post-translationally, myristoylated at Gly-551, following proteolytic cleavage at Asp-550. In terms of tissue distribution, expressed in the brain cortex (at protein level). Widely expressed with the highest level of expression in the brain (nerve fibers, varicosities, and nerve endings). In the brain, the regions where it can be mainly found are the cerebellar cortex, the neocortex, the striatum, and the hippocampal formation.

The protein resides in the cytoplasm. The protein localises to the nucleus. It localises to the early endosome. Its subcellular location is the cytoplasmic vesicle. It is found in the autophagosome. Functionally, may play a role in microtubule-mediated transport or vesicle function. Its function is as follows. Promotes the formation of autophagic vesicles. The protein is Huntingtin (HTT) of Homo sapiens (Human).